Reading from the N-terminus, the 760-residue chain is MNRKNVTRTITAIAVVVLLGWSFFYFSDDTRGYKPVDTSVAITQINGDNVKSAQIDDREQQLRLILKKGNNETDGSEKVITKYPTGYAVDLFNALSAKNAKVSTVVNQGSILGELLVYVLPLLLLVGLFVMFSRMQGGARMGFGFGKSRAKQLSKDMPKTTFADVAGVDEAVEELYEIKDFLQNPSRYQALGAKIPKGVLLYGPPGTGKTLLARAVAGEAGVPFFTISGSDFVEMFVGVGASRVRDLFEQAKQNSPCIIFVDEIDAVGRQRGAGLGGGHDEREQTLNQLLVEMDGFGDRAGVILIAATNRPDILDPALLRPGRFDRQIPVSNPDLAGRRAVLRVHSKGKPMAADADLDGLAKRTVGMTGADLANVINEAALLTARENGTVITGPALEEAVDRVIGGPRRKGRIISEQEKKITAYHEGGHTLAAWAMPDIEPIYKVTILARGRTGGHAVAVPEEDKGLRTRSEMIAQLVFAMGGRAAEELVFREPTTGAVSDIEQATKIARSMVTEFGMSSKLGAVKYGSEHGDPFLGRTMGTQPDYSHEVAREIDEEVRKLIEAAHTEAWEILTEYRDVLDTLAGELLEKETLHRPELESIFADVEKRPRLTMFDDFGGRIPSDKPPIKTPGELAIERGEPWPQPVPEPAFKAAIAQATQAAEAARSDAGQTGHGANGSPAGTHRSGDRQYGSTQPDYGAPAGWHAPGWPPRSSHRPSYSGEPAPTYPGQPYPTGQADPGSDESSAEQDDEVSRTKPAHG.

The Cytoplasmic portion of the chain corresponds to 1–5 (MNRKN). The helical transmembrane segment at 6-26 (VTRTITAIAVVVLLGWSFFYF) threads the bilayer. Residues 27 to 110 (SDDTRGYKPV…KVSTVVNQGS (84 aa)) lie on the Extracellular side of the membrane. The chain crosses the membrane as a helical span at residues 111-131 (ILGELLVYVLPLLLLVGLFVM). The Cytoplasmic portion of the chain corresponds to 132-760 (FSRMQGGARM…EVSRTKPAHG (629 aa)). 203–210 (GPPGTGKT) contributes to the ATP binding site. Position 425 (H425) interacts with Zn(2+). The active site involves E426. Positions 429 and 501 each coordinate Zn(2+). The segment at 616-760 (DFGGRIPSDK…EVSRTKPAHG (145 aa)) is disordered. The segment covering 650–669 (AFKAAIAQATQAAEAARSDA) has biased composition (low complexity). Residues 740–750 (GSDESSAEQDD) show a composition bias toward acidic residues.

In the central section; belongs to the AAA ATPase family. It in the C-terminal section; belongs to the peptidase M41 family. As to quaternary structure, homohexamer. Requires Zn(2+) as cofactor.

The protein resides in the cell membrane. In terms of biological role, acts as a processive, ATP-dependent zinc metallopeptidase for both cytoplasmic and membrane proteins. Plays a role in the quality control of integral membrane proteins. The chain is ATP-dependent zinc metalloprotease FtsH from Mycobacterium bovis (strain ATCC BAA-935 / AF2122/97).